Here is a 257-residue protein sequence, read N- to C-terminus: Snake venom serine protease KN8 (257 aa).

The first 18 residues, 1-18 (MVLIRVLANLLILQLSYA), serve as a signal peptide directing secretion. The propeptide occupies 19–24 (QKSSEL). The Peptidase S1 domain occupies 25–248 (VVGGLPCNIN…HLDWIKSIIA (224 aa)). Intrachain disulfides connect cysteine 31/cysteine 162, cysteine 49/cysteine 65, cysteine 141/cysteine 209, cysteine 173/cysteine 188, and cysteine 199/cysteine 224. Histidine 64 serves as the catalytic Charge relay system. Residue asparagine 102 is glycosylated (N-linked (GlcNAc...) asparagine). Aspartate 109 acts as the Charge relay system in catalysis. N-linked (GlcNAc...) asparagine glycans are attached at residues asparagine 120 and asparagine 121. The active-site Charge relay system is serine 203.

The protein belongs to the peptidase S1 family. Snake venom subfamily. In terms of assembly, monomer. Expressed by the venom gland.

Its subcellular location is the secreted. Functionally, snake venom serine protease that may act in the hemostasis system of the prey. This chain is Snake venom serine protease KN8, found in Trimeresurus stejnegeri (Chinese green tree viper).